Reading from the N-terminus, the 1166-residue chain is Folliculin-interacting protein 1 (1166 aa).

Residues 37–478 (FDPSQIRLIV…TVMPNGQPPI (442 aa)) form the uDENN FNIP1/2-type domain. Residues Ser-220, Ser-230, Ser-232, and Ser-261 each carry the phosphoserine; by AMPK modification. Phosphothreonine is present on Thr-294. Ser-296 is subject to Phosphoserine. A cDENN FNIP1/2-type domain is found at 486-1092 (SSQSVDMLAK…VSNLLHSTLQ (607 aa)). At Ser-593 the chain carries Phosphoserine; by AMPK. Ser-594 carries the phosphoserine modification. Zn(2+)-binding residues include Cys-608 and Cys-610. The short motif at 608–615 (CNCKYCSH) is the Cys degron element. The tract at residues 611–612 (KY) is KY-finger. Zn(2+) contacts are provided by Cys-613 and His-615. Ser-760 and Ser-763 each carry phosphoserine. 2 disordered regions span residues 781-817 (TKPLKEERGAIDQHQETKQTTKDQSGESDTQNMVSEE) and 912-956 (LVPH…HDMT). Basic and acidic residues-rich tracts occupy residues 783-805 (PLKEERGAIDQHQETKQTTKDQS) and 915-925 (HGDKESSDKKI). An interaction with HSP90AA1 region spans residues 929–1166 (TEWDIPRNES…HSPYVAQILL (238 aa)). Ser-938 is subject to Phosphoserine; alternate; by CK2. An O-linked (GlcNAc) serine; alternate glycan is attached at Ser-938. Phosphoserine; by CK2 occurs at positions 939, 941, 946, and 948. The 56-residue stretch at 1102–1157 (FCVMHLEDRLQELYFKSKMLSEYLRGQMRVHVKELGVVLGIESSDLPLLAAVASTH) folds into the dDENN FNIP1/2-type domain. A Glycyl lysine isopeptide (Lys-Gly) (interchain with G-Cter in ubiquitin) cross-link involves residue Lys-1119.

This sequence belongs to the FNIP family. In terms of assembly, homodimer and homomultimer. Heterodimer and heteromultimer with FNIP2. Interacts with FLCN (via C-terminus). Component of the lysosomal folliculin complex (LFC), composed of FLCN, FNIP1 (or FNIP2), RagA/RRAGA or RagB/RRAGB GDP-bound, RagC/RRAGC or RagD/RRAGD GTP-bound, and Ragulator. Interacts with HSPCA and with the PRKAA1, PRKAB1 and PRKAG1 subunits of 5'-AMP-activated protein kinase (AMPK). Phosphorylated FLCN and AMPK are preferentially bound. Interacts with HSP70, STIP1, PTGES3, CDC37, BRAF, GCR and CDK4. Interacts with HSP90AA1; the interaction inhibits HSP90AA1 ATPase activity. Interacts with ATP2A2. Phosphorylated by AMPK in response to energetic stress. Phosphorylation by AMPK in response to mitochondrial damage promotes inactivation of the non-canonical mTORC1 signaling, nuclear translocation of TFEB and TFE3, inducing transcription of lysosomal or autophagy genes. Sequential phosphorylation by CK2 promotes its gradual interaction with HSP90AA1/Hsp90. Priming phosphorylation at Ser-938 is followed by relay phosphorylation at Ser-939, Ser-941, Ser-946 and Ser-948, promoting its gradual interaction with HSP90AA1/Hsp90. This leads to incremental inhibition of HSP90AA1/Hsp90 ATPase activity and gradual activation of both kinase and non-kinase clients. Dephosphorylated by protein phosphatase 5 (PP5), promoting glycosylation by OGT. Post-translationally, glcNAcylation at Ser-938 by OGT following dephosphorylation by protein phosphatase 5 (PP5) promotes ubiquitination and degradation by the proteasome. In terms of processing, ubiquitinated through 'Lys-11' linkage of ubiquitin moieties at Lys-1119 following glycosylation by OGT, leading to its degradation by the proteasome. Ubiquitinated by the CRL2(FEM1B) complex in response to reductive stress: reductive stress causes reduction of the conserved Cys degron in FNIP1, followed by zinc-binding, zinc acting as a molecular glue for recognition by the CRL2(FEM1B) complex. Ubiquitination leads to FNIP1 degradation, and activation of mitochondria to recalibrate reactive oxygen species (ROS). Oxidation of the Cys degron in normal conditions promotes its stabilization by preventing recognition and ubiquitination by the CRL2(FEM1B) complex. Strong expression is found in the heart, liver placenta, muscle, nasal mucosa, salivary gland and uvula and moderate expression in kidney and lung. Higher levels detected in clear cell renal cell carcinoma (RCC) and chromophobe RCC than in normal kidney tissue. Expressed in peripheral blood mononuclear cells.

The protein localises to the lysosome membrane. It localises to the cytoplasm. It is found in the cytosol. In terms of biological role, binding partner of the GTPase-activating protein FLCN: involved in the cellular response to amino acid availability by regulating the non-canonical mTORC1 signaling cascade controlling the MiT/TFE factors TFEB and TFE3. Required to promote FLCN recruitment to lysosomes and interaction with Rag GTPases, leading to activation of the non-canonical mTORC1 signaling. In low-amino acid conditions, component of the lysosomal folliculin complex (LFC) on the membrane of lysosomes, which inhibits the GTPase-activating activity of FLCN, thereby inactivating mTORC1 and promoting nuclear translocation of TFEB and TFE3. Upon amino acid restimulation, disassembly of the LFC complex liberates the GTPase-activating activity of FLCN, leading to activation of mTORC1 and subsequent inactivation of TFEB and TFE3. Together with FLCN, regulates autophagy: following phosphorylation by ULK1, interacts with GABARAP and promotes autophagy. In addition to its role in mTORC1 signaling, also acts as a co-chaperone of HSP90AA1/Hsp90: following gradual phosphorylation by CK2, inhibits the ATPase activity of HSP90AA1/Hsp90, leading to activate both kinase and non-kinase client proteins of HSP90AA1/Hsp90. Acts as a scaffold to load client protein FLCN onto HSP90AA1/Hsp90. Competes with the activating co-chaperone AHSA1 for binding to HSP90AA1, thereby providing a reciprocal regulatory mechanism for chaperoning of client proteins. Also acts as a core component of the reductive stress response by inhibiting activation of mitochondria in normal conditions: in response to reductive stress, the conserved Cys degron is reduced, leading to recognition and polyubiquitylation by the CRL2(FEM1B) complex, followed by proteasomal. Required for B-cell development. The sequence is that of Folliculin-interacting protein 1 from Homo sapiens (Human).